A 238-amino-acid chain; its full sequence is Flagellar L-ring protein (238 aa).

Positions 1-23 (MIKLFICQKKYYLTAIFLLTIQS) are cleaved as a signal peptide. The N-palmitoyl cysteine moiety is linked to residue Cys24. Cys24 carries S-diacylglycerol cysteine lipidation.

Belongs to the FlgH family. As to quaternary structure, the basal body constitutes a major portion of the flagellar organelle and consists of four rings (L,P,S, and M) mounted on a central rod.

The protein localises to the cell outer membrane. It localises to the bacterial flagellum basal body. Assembles around the rod to form the L-ring and probably protects the motor/basal body from shearing forces during rotation. This chain is Flagellar L-ring protein, found in Buchnera aphidicola subsp. Acyrthosiphon pisum (strain 5A).